The sequence spans 357 residues: UPF0283 membrane protein BSUIS_A1077 (357 aa).

Residues 1-36 (MSDKTPRKPTAFRLEQPARVSAASEQEEPRHPRAVK) are disordered. Basic and acidic residues predominate over residues 27 to 36 (EEPRHPRAVK). 2 helical membrane passes run 78 to 98 (ILFGALGILVSFAIGIWTEDL) and 109 to 129 (LGWTALGVAMVALAAFAAIIL).

It belongs to the UPF0283 family.

Its subcellular location is the cell inner membrane. This chain is UPF0283 membrane protein BSUIS_A1077, found in Brucella suis (strain ATCC 23445 / NCTC 10510).